Consider the following 393-residue polypeptide: Ig heavy chain C region (393 aa).

3 consecutive Ig-like domains span residues 63–157 (PTVI…RNIT), 168–260 (PVIK…ASIH), and 270–370 (PSVS…RTVN). 8 N-linked (GlcNAc...) asparagine glycosylation sites follow: Asn119, Asn155, Asn200, Asn230, Asn329, Asn366, Asn370, and Asn380.

In Heterodontus francisci (Horn shark), this protein is Ig heavy chain C region.